A 759-amino-acid polypeptide reads, in one-letter code: Protein hunchback (759 aa).

Disordered regions lie at residues 30–51 (EPGHHLDGNSVASSPRQSPIPS) and 171–215 (SSEK…EDMK). Over residues 39-51 (SVASSPRQSPIPS) the composition is skewed to polar residues. Thr179 carries the post-translational modification Phosphothreonine. Phosphoserine is present on residues Ser189, Ser208, Ser210, and Ser211. Basic and acidic residues predominate over residues 199–215 (EPEKEHDQMSNSSEDMK). 4 C2H2-type zinc fingers span residues 241 to 263 (YKCKTCGVVAITKVDFWAHTRTH), 270 to 292 (LQCPKCPFVTEFKHHLEYHIRKH), 298 to 320 (FQCDKCSYTCVNKSMLNSHRKSH), and 326 to 350 (YRCADCDYATKYCHSFKLHLRKYGH). Disordered stretches follow at residues 366 to 419 (LVID…TSQL), 513 to 565 (QLQQ…PQQP), and 606 to 696 (MTSP…APAS). 2 stretches are compositionally biased toward low complexity: residues 399-419 (VAAVAPQQQQSQPAQPATSQL) and 513-522 (QLQQQNQQQS). A compositionally biased stretch (acidic residues) spans 523 to 532 (DNEEEEQDDE). Residues Ser537 and Ser540 each carry the phosphoserine modification. Over residues 655 to 696 (ANTSASSTASSSGNSSNASSNGNSSSNSSSNGTSSAAAAPAS) the composition is skewed to low complexity. 2 C2H2-type zinc fingers span residues 706 to 728 (YECKYCDIFFKDAVLYTIHMGYH) and 734 to 758 (FKCNMCGEKCDGPVGLFVHMARNAH).

Belongs to the hunchback C2H2-type zinc-finger protein family.

It is found in the nucleus. Its function is as follows. Gap class segmentation protein that controls development of head structures. This chain is Protein hunchback, found in Drosophila yakuba (Fruit fly).